Consider the following 460-residue polypeptide: Zinc transporter 6 (460 aa).

The Cytoplasmic segment spans residues 1 to 33 (MGTIHLFRKPQRSFFGKLLQEFRLVAADRRSWK). The chain crosses the membrane as a helical span at residues 34–54 (ILLFGAINVLCTGFLLMWCSS). The Extracellular segment spans residues 55–64 (TNSIALTAYT). A helical transmembrane segment spans residues 65–85 (YLTIFDLFSLITCLISYWVMM). At 86-98 (RKPSPVYSFGFER) the chain is on the cytoplasmic side. Residues 99-119 (LEVLAVFASTVLAQLGALFIL) traverse the membrane as a helical segment. Residues 120-134 (KESAERFLEQPEIHT) lie on the Extracellular side of the membrane. Residues 135 to 155 (GRLLVGTFVALSFNLFTMLSI) form a helical membrane-spanning segment. The Cytoplasmic portion of the chain corresponds to 156 to 200 (RNKPFAYVSEAASTSWLQEHVADLSRSLCGLIPGLSSIFLPRMNP). Residues 201–221 (FVLIDLAGAFALCITYMLIEI) traverse the membrane as a helical segment. At 222–223 (NN) the chain is on the extracellular side. The chain crosses the membrane as a helical span at residues 224–244 (YFAVDTASAIAIALMTFGTMY). The Cytoplasmic portion of the chain corresponds to 245–460 (PMSVYSGKVL…GINRMGQPRP (216 aa)). A disordered region spans residues 371–390 (TPVTSTPAKPSSPPPEFSFN).

The protein belongs to the cation diffusion facilitator (CDF) transporter (TC 2.A.4) family. SLC30A subfamily. Heterodimer with SLC30A5; form a functional zinc ion transmembrane transporter. As to expression, expressed in brain and liver, and to a lower extent also in lung. Highly expressed in brain (at protein level).

The protein localises to the golgi apparatus. It is found in the trans-Golgi network membrane. Has probably no intrinsic transporter activity but together with SLC30A5 forms a functional zinc ion:proton antiporter heterodimer, mediating zinc entry into the lumen of organelles along the secretory pathway. As part of that zinc ion:proton antiporter, contributes to zinc ion homeostasis within the early secretory pathway and regulates the activation and folding of enzymes like alkaline phosphatases and enzymes involved in phosphatidylinositol glycan anchor biosynthesis. This chain is Zinc transporter 6 (Slc30a6), found in Mus musculus (Mouse).